Here is a 218-residue protein sequence, read N- to C-terminus: ATP-dependent dethiobiotin synthetase BioD (218 aa).

10–15 (NAGKTT) serves as a coordination point for ATP. Position 14 (threonine 14) interacts with Mg(2+). Residue lysine 35 is part of the active site. Threonine 39 is a binding site for substrate. A Mg(2+)-binding site is contributed by glutamate 116. Residues 116-119 (EGAG) and 176-177 (LR) each bind ATP.

This sequence belongs to the dethiobiotin synthetase family. As to quaternary structure, homodimer. Mg(2+) serves as cofactor.

The protein localises to the cytoplasm. The catalysed reaction is (7R,8S)-7,8-diammoniononanoate + CO2 + ATP = (4R,5S)-dethiobiotin + ADP + phosphate + 3 H(+). Its pathway is cofactor biosynthesis; biotin biosynthesis; biotin from 7,8-diaminononanoate: step 1/2. In terms of biological role, catalyzes a mechanistically unusual reaction, the ATP-dependent insertion of CO2 between the N7 and N8 nitrogen atoms of 7,8-diaminopelargonic acid (DAPA, also called 7,8-diammoniononanoate) to form a ureido ring. The chain is ATP-dependent dethiobiotin synthetase BioD from Helicobacter pylori (strain J99 / ATCC 700824) (Campylobacter pylori J99).